A 462-amino-acid chain; its full sequence is Lysyl endopeptidase (462 aa).

A signal peptide spans 1–24; the sequence is MHKRTYLNACLVLALAAGASQALA. Residues 25 to 211 constitute a propeptide that is removed on maturation; that stretch reads APGASEMAGD…VSYFADSLYK (187 aa). Cystine bridges form between cysteine 224–cysteine 435, cysteine 230–cysteine 305, and cysteine 262–cysteine 284. Residues histidine 283, aspartate 333, and serine 409 each act as charge relay system in the active site.

The protein belongs to the peptidase S1 family. Experiments performed in E.coli. Processing of pro-endopeptidase to mature endopeptidase is probably autocatalytic, as mutations in the probable active site residues prevent processing, and purified inactive pro-endopeptidase disappears in the presence of active endopeptidase.

It is found in the secreted. It carries out the reaction Preferential cleavage: Lys-|-Xaa, including Lys-|-Pro.. Its function is as follows. Lysine-specific endoprotease. Involved in corneal virulence. This is Lysyl endopeptidase (prpL) from Pseudomonas aeruginosa (strain ATCC 15692 / DSM 22644 / CIP 104116 / JCM 14847 / LMG 12228 / 1C / PRS 101 / PAO1).